The sequence spans 120 residues: Large ribosomal subunit protein bL12 (120 aa).

This sequence belongs to the bacterial ribosomal protein bL12 family. Homodimer. Part of the ribosomal stalk of the 50S ribosomal subunit. Forms a multimeric L10(L12)X complex, where L10 forms an elongated spine to which 2 to 4 L12 dimers bind in a sequential fashion. Binds GTP-bound translation factors.

Its function is as follows. Forms part of the ribosomal stalk which helps the ribosome interact with GTP-bound translation factors. Is thus essential for accurate translation. This Haemophilus ducreyi (strain 35000HP / ATCC 700724) protein is Large ribosomal subunit protein bL12.